The chain runs to 952 residues: Histone deacetylase 7 (952 aa).

Transcription repression regions lie at residues methionine 1–arginine 268 and glycine 218–glycine 546. Positions serine 49–proline 149 are interaction with MEF2A. Serine 109 carries the phosphoserine modification. Disordered regions lie at residues leucine 130–glycine 224 and proline 261–serine 283. At serine 155 the chain carries Phosphoserine; by MARK2, MARK3 and PKD/PRKD1. A compositionally biased stretch (basic and acidic residues) spans lysine 167–serine 181. Serine 181 is modified (phosphoserine; by PKD/PRKD2). A compositionally biased stretch (low complexity) spans serine 197–proline 212. Serine 283 is subject to Phosphoserine. A Phosphothreonine modification is found at threonine 286. Disordered regions lie at residues leucine 349–arginine 377, lysine 389–proline 441, and leucine 460–glutamate 510. A Phosphoserine; by PKD/PRKD1 modification is found at serine 358. Residues proline 360–methionine 374 are compositionally biased toward pro residues. A phosphoserine mark is found at serine 364, serine 405, serine 486, serine 487, and serine 507. A compositionally biased stretch (low complexity) spans serine 482–alanine 503. The histone deacetylase stretch occupies residues proline 512–aspartate 865. Cysteine 533, cysteine 535, and histidine 541 together coordinate Zn(2+). The residue at position 595 (serine 595) is a Phosphoserine. Residue cysteine 618 participates in Zn(2+) binding. Residue histidine 670 is part of the active site. The interval asparagine 877–leucine 952 is interaction with SIN3A. A Nuclear export signal motif is present at residues lysine 917 to leucine 952.

This sequence belongs to the histone deacetylase family. HD type 2 subfamily. As to quaternary structure, interacts with HDAC1, HDAC2, HDAC3, HDAC4, HDAC5, NCOR1, NCOR2, SIN3A, SIN3B, RBBP4, RBBP7, MTA1L1, SAP30 and MBD3. Interacts with KAT5 and EDNRA. Interacts with the 14-3-3 protein YWHAE, MEF2A, MEF2B and MEF2C. Interacts with ZMYND15. Interacts with KDM5B. Interacts with PML. Interacts with FOXP3. Interacts with RARA. Post-translationally, may be phosphorylated by CaMK1. Phosphorylated by the PKC kinases PKN1 and PKN2, impairing nuclear import. Phosphorylation at Ser-155 by MARK2, MARK3 and PRKD1 promotes interaction with 14-3-3 proteins and export from the nucleus. Phosphorylation at Ser-155 is a prerequisite for phosphorylation at Ser-181.

It localises to the nucleus. The protein resides in the cytoplasm. It carries out the reaction N(6)-acetyl-L-lysyl-[histone] + H2O = L-lysyl-[histone] + acetate. It catalyses the reaction N(6)-acetyl-L-lysyl-[protein] + H2O = L-lysyl-[protein] + acetate. Functionally, responsible for the deacetylation of lysine residues on the N-terminal part of the core histones (H2A, H2B, H3 and H4). Histone deacetylation gives a tag for epigenetic repression and plays an important role in transcriptional regulation, cell cycle progression and developmental events. Histone deacetylases act via the formation of large multiprotein complexes. Involved in muscle maturation by repressing transcription of myocyte enhancer factors such as MEF2A, MEF2B and MEF2C. During muscle differentiation, it shuttles into the cytoplasm, allowing the expression of myocyte enhancer factors. May be involved in Epstein-Barr virus (EBV) latency, possibly by repressing the viral BZLF1 gene. Positively regulates the transcriptional repressor activity of FOXP3. Serves as a corepressor of RARA, causing its deacetylation and inhibition of RARE DNA element binding. In association with RARA, plays a role in the repression of microRNA-10a and thereby in the inflammatory response. Also acetylates non-histone proteins, such as ALKBH5. The sequence is that of Histone deacetylase 7 (HDAC7) from Homo sapiens (Human).